Here is a 230-residue protein sequence, read N- to C-terminus: Potassium/proton antiporter CemA (230 aa).

4 helical membrane-spanning segments follow: residues 7 to 27, 107 to 127, 145 to 165, and 181 to 201; these read LPSL…SSSF, ILHF…FFLG, LNDS…VGFH, and FGWA…PVIL.

Belongs to the CemA family.

It localises to the plastid. Its subcellular location is the chloroplast inner membrane. It catalyses the reaction K(+)(in) + H(+)(out) = K(+)(out) + H(+)(in). Its function is as follows. Contributes to K(+)/H(+) antiport activity by supporting proton efflux to control proton extrusion and homeostasis in chloroplasts in a light-dependent manner to modulate photosynthesis. Prevents excessive induction of non-photochemical quenching (NPQ) under continuous-light conditions. Indirectly promotes efficient inorganic carbon uptake into chloroplasts. This is Potassium/proton antiporter CemA from Triticum aestivum (Wheat).